The primary structure comprises 128 residues: V-type proton ATPase subunit F (128 aa).

This sequence belongs to the V-ATPase F subunit family. V-ATPase is a heteromultimeric enzyme composed of a peripheral catalytic V1 complex (components A to H) attached to an integral membrane V0 proton pore complex (components: a, c, c'', d and e).

The protein resides in the vacuole membrane. Subunit of the peripheral V1 complex of vacuolar ATPase essential for assembly or catalytic function. V-ATPase is responsible for acidifying a variety of intracellular compartments in eukaryotic cells. The chain is V-type proton ATPase subunit F (VHA-F) from Arabidopsis thaliana (Mouse-ear cress).